The chain runs to 726 residues: Catalase-peroxidase (726 aa).

The interval 1 to 33 is disordered; that stretch reads MSTSDDIHNTTATGKCPFHQGGHDQSAGAGTTT. The segment at residues 105-226 is a cross-link (tryptophyl-tyrosyl-methioninium (Trp-Tyr) (with M-252)); that stretch reads WHGAGTYRSI…LGATEMGLIY (122 aa). Histidine 106 functions as the Proton acceptor in the catalytic mechanism. The tryptophyl-tyrosyl-methioninium (Tyr-Met) (with W-105) cross-link spans 226-252; sequence YVNPEGPDHSGEPLSAAAAIRATFGNM. Histidine 267 is a binding site for heme b.

This sequence belongs to the peroxidase family. Peroxidase/catalase subfamily. As to quaternary structure, homodimer or homotetramer. Requires heme b as cofactor. Post-translationally, formation of the three residue Trp-Tyr-Met cross-link is important for the catalase, but not the peroxidase activity of the enzyme.

It catalyses the reaction H2O2 + AH2 = A + 2 H2O. The enzyme catalyses 2 H2O2 = O2 + 2 H2O. In terms of biological role, bifunctional enzyme with both catalase and broad-spectrum peroxidase activity. The protein is Catalase-peroxidase of Escherichia coli (strain K12 / DH10B).